A 204-amino-acid chain; its full sequence is Cytochrome b6 (204 aa).

A helical membrane pass occupies residues 23 to 43 (YCLGGITLTSFLVQVATGSAM). C24 serves as a coordination point for heme c. Positions 75 and 89 each coordinate heme b. The next 3 helical transmembrane spans lie at 81 to 101 (MMVLMMILHVFRVYLTGGFKK), 107 to 127 (WVTGVILGVLTVSFGVTGYSL), and 136 to 157 (AVKIVTGVPEAIPVIGSPLVEL). H176 and H191 together coordinate heme b. The chain crosses the membrane as a helical span at residues 177–197 (TFILPLLTAVFMPMHFLMIRK).

Belongs to the cytochrome b family. PetB subfamily. In terms of assembly, the 4 large subunits of the cytochrome b6-f complex are cytochrome b6, subunit IV (17 kDa polypeptide, PetD), cytochrome f and the Rieske protein, while the 4 small subunits are PetG, PetL, PetM and PetN. The complex functions as a dimer. The cofactor is heme b. Heme c serves as cofactor.

It is found in the plastid. Its subcellular location is the chloroplast thylakoid membrane. In terms of biological role, component of the cytochrome b6-f complex, which mediates electron transfer between photosystem II (PSII) and photosystem I (PSI), cyclic electron flow around PSI, and state transitions. The protein is Cytochrome b6 of Picea abies (Norway spruce).